We begin with the raw amino-acid sequence, 362 residues long: Adenosine deaminase (362 aa).

Zn(2+) contacts are provided by His19 and His21. Positions 21, 23, and 181 each coordinate substrate. His208 is a Zn(2+) binding site. Residue Glu211 is the Proton donor of the active site. Asp300 contributes to the Zn(2+) binding site.

It belongs to the metallo-dependent hydrolases superfamily. Adenosine and AMP deaminases family. Adenosine deaminase subfamily. Zn(2+) serves as cofactor.

The enzyme catalyses adenosine + H2O + H(+) = inosine + NH4(+). It catalyses the reaction 2'-deoxyadenosine + H2O + H(+) = 2'-deoxyinosine + NH4(+). Catalyzes the hydrolytic deamination of adenosine and 2-deoxyadenosine. In Mycolicibacterium vanbaalenii (strain DSM 7251 / JCM 13017 / BCRC 16820 / KCTC 9966 / NRRL B-24157 / PYR-1) (Mycobacterium vanbaalenii), this protein is Adenosine deaminase.